The primary structure comprises 419 residues: 3-isopropylmalate dehydratase large subunit (419 aa).

[4Fe-4S] cluster contacts are provided by Cys300, Cys360, and Cys363.

This sequence belongs to the aconitase/IPM isomerase family. LeuC type 2 subfamily. Heterodimer of LeuC and LeuD. [4Fe-4S] cluster serves as cofactor.

It carries out the reaction (2R,3S)-3-isopropylmalate = (2S)-2-isopropylmalate. It participates in amino-acid biosynthesis; L-leucine biosynthesis; L-leucine from 3-methyl-2-oxobutanoate: step 2/4. Its function is as follows. Catalyzes the isomerization between 2-isopropylmalate and 3-isopropylmalate, via the formation of 2-isopropylmaleate. In Nitratidesulfovibrio vulgaris (strain ATCC 29579 / DSM 644 / CCUG 34227 / NCIMB 8303 / VKM B-1760 / Hildenborough) (Desulfovibrio vulgaris), this protein is 3-isopropylmalate dehydratase large subunit.